Reading from the N-terminus, the 119-residue chain is Large ribosomal subunit protein uL22 (119 aa).

The protein belongs to the universal ribosomal protein uL22 family. Part of the 50S ribosomal subunit.

Its function is as follows. This protein binds specifically to 23S rRNA; its binding is stimulated by other ribosomal proteins, e.g. L4, L17, and L20. It is important during the early stages of 50S assembly. It makes multiple contacts with different domains of the 23S rRNA in the assembled 50S subunit and ribosome. In terms of biological role, the globular domain of the protein is located near the polypeptide exit tunnel on the outside of the subunit, while an extended beta-hairpin is found that lines the wall of the exit tunnel in the center of the 70S ribosome. The chain is Large ribosomal subunit protein uL22 from Trichormus variabilis (strain ATCC 29413 / PCC 7937) (Anabaena variabilis).